Here is a 415-residue protein sequence, read N- to C-terminus: Serine hydroxymethyltransferase (415 aa).

(6S)-5,6,7,8-tetrahydrofolate is bound by residues Leu117 and 121–123; that span reads GHL. Lys226 bears the N6-(pyridoxal phosphate)lysine mark. Residues Glu241 and 349 to 351 contribute to the (6S)-5,6,7,8-tetrahydrofolate site; that span reads SPF.

This sequence belongs to the SHMT family. Homodimer. Pyridoxal 5'-phosphate serves as cofactor.

It localises to the cytoplasm. The catalysed reaction is (6R)-5,10-methylene-5,6,7,8-tetrahydrofolate + glycine + H2O = (6S)-5,6,7,8-tetrahydrofolate + L-serine. It functions in the pathway one-carbon metabolism; tetrahydrofolate interconversion. Its pathway is amino-acid biosynthesis; glycine biosynthesis; glycine from L-serine: step 1/1. Its function is as follows. Catalyzes the reversible interconversion of serine and glycine with tetrahydrofolate (THF) serving as the one-carbon carrier. This reaction serves as the major source of one-carbon groups required for the biosynthesis of purines, thymidylate, methionine, and other important biomolecules. Also exhibits THF-independent aldolase activity toward beta-hydroxyamino acids, producing glycine and aldehydes, via a retro-aldol mechanism. In Geobacter sulfurreducens (strain ATCC 51573 / DSM 12127 / PCA), this protein is Serine hydroxymethyltransferase.